The primary structure comprises 87 residues: Small ribosomal subunit protein bS20 (87 aa).

Positions 1-22 are enriched in basic residues; the sequence is MANIKSAKKRAVQSEKRRKHNA. The disordered stretch occupies residues 1–27; the sequence is MANIKSAKKRAVQSEKRRKHNASSRSM.

This sequence belongs to the bacterial ribosomal protein bS20 family.

In terms of biological role, binds directly to 16S ribosomal RNA. This chain is Small ribosomal subunit protein bS20, found in Pectobacterium atrosepticum (strain SCRI 1043 / ATCC BAA-672) (Erwinia carotovora subsp. atroseptica).